A 389-amino-acid polypeptide reads, in one-letter code: G2/M cell-cycle inhibitor DR6 (389 aa).

It belongs to the Roseolovirus DR6 family.

Its subcellular location is the host nucleus. In terms of biological role, inhibits the host G2/M cell-cycle progression in a p53-independent manner. This is G2/M cell-cycle inhibitor DR6 (DR6L) from Homo sapiens (Human).